The chain runs to 185 residues: Ribosome-recycling factor (185 aa).

Positions 135–159 are disordered; the sequence is ANDEVKKLEKDKAITEDESKKGQDE.

This sequence belongs to the RRF family.

The protein localises to the cytoplasm. Responsible for the release of ribosomes from messenger RNA at the termination of protein biosynthesis. May increase the efficiency of translation by recycling ribosomes from one round of translation to another. The chain is Ribosome-recycling factor from Campylobacter curvus (strain 525.92).